A 596-amino-acid polypeptide reads, in one-letter code: Two-component response regulator ARR12 (596 aa).

The region spanning Arg18–Val133 is the Response regulatory domain. Asp69 carries the post-translational modification 4-aspartylphosphate. The span at Asp138–Ser153 shows a compositional bias: basic and acidic residues. Residues Asp138–Ala192 form a disordered region. Residues Val158–Lys167 are compositionally biased toward polar residues. Positions Asn177 to Asp189 are enriched in acidic residues. A Nuclear localization signal motif is present at residues Lys194 to Arg197. A DNA-binding region (myb-like GARP) is located at residues Arg197–Arg247. Residues Asn437–Ser467 are disordered. Over residues His450 to Phe459 the composition is skewed to polar residues.

Belongs to the ARR family. Type-B subfamily. As to quaternary structure, binds the target DNA as a monomer. In terms of processing, two-component system major event consists of a His-to-Asp phosphorelay between a sensor histidine kinase (HK) and a response regulator (RR). In plants, the His-to-Asp phosphorelay involves an additional intermediate named Histidine-containing phosphotransfer protein (HPt). This multistep phosphorelay consists of a His-Asp-His-Asp sequential transfer of a phosphate group between first a His and an Asp of the HK protein, followed by the transfer to a conserved His of the HPt protein and finally the transfer to an Asp in the receiver domain of the RR protein. In terms of tissue distribution, detected in the whole plant. Predominantly expressed in leaves. Expressed at the root transition zone.

The protein localises to the nucleus. Its function is as follows. Transcriptional activator that binds specifically to the DNA sequence 5'-[AG]GATT-3'. Functions as a response regulator involved in His-to-Asp phosphorelay signal transduction system. Phosphorylation of the Asp residue in the receiver domain activates the ability of the protein to promote the transcription of target genes. Could directly activate some type-A response regulators in response to cytokinins. Involved in the root-meristem size determination through the regulation of cell differentiation. Involved in activating SHY2 during meristem growth and controls PIN expression via activation of SHY2. The sequence is that of Two-component response regulator ARR12 (ARR12) from Arabidopsis thaliana (Mouse-ear cress).